The sequence spans 1218 residues: Probable cation-transporting ATPase 13A5 (1218 aa).

4 consecutive transmembrane segments (helical) span residues 33–53, 222–242, 401–421, and 433–453; these read KAFC…VFYW, GYIE…VLSV, FIVF…GVYM, and MALI…LTIG. Aspartate 486 serves as the catalytic 4-aspartylphosphate intermediate. Asparagine 540, asparagine 669, and asparagine 819 each carry an N-linked (GlcNAc...) asparagine glycan. Mg(2+) is bound by residues aspartate 850 and aspartate 854. The next 6 membrane-spanning stretches (helical) occupy residues 903–923, 940–956, 973–993, 1042–1062, 1077–1097, and 1115–1135; these read FGVF…ALLL, VAIT…THAY, LLLS…SAFL, FETT…AFIF, IFSF…FSDF, and VLIL…EDSI.

It belongs to the cation transport ATPase (P-type) (TC 3.A.3) family. Type V subfamily.

Its subcellular location is the membrane. The catalysed reaction is ATP + H2O = ADP + phosphate + H(+). The protein is Probable cation-transporting ATPase 13A5 (ATP13A5) of Homo sapiens (Human).